The following is a 207-amino-acid chain: Superoxide dismutase [Mn] (207 aa).

Residues histidine 28, histidine 76, aspartate 160, and histidine 164 each coordinate Mn(2+).

The protein belongs to the iron/manganese superoxide dismutase family. Mn(2+) serves as cofactor.

The catalysed reaction is 2 superoxide + 2 H(+) = H2O2 + O2. Its function is as follows. Destroys superoxide anion radicals which are normally produced within the cells and which are toxic to biological systems. This Mycolicibacterium fortuitum (Mycobacterium fortuitum) protein is Superoxide dismutase [Mn] (sodA).